We begin with the raw amino-acid sequence, 380 residues long: Flap endonuclease 1 (380 aa).

Residues M1–R104 are N-domain. R19 bears the Symmetric dimethylarginine; by PRMT5 mark. Mg(2+) is bound at residue D34. R47 and R70 together coordinate DNA. K80 carries the post-translational modification N6-acetyllysine. Position 86 (D86) interacts with Mg(2+). A symmetric dimethylarginine; by PRMT5 mark is found at R100 and R104. An I-domain region spans residues E122–H253. E158, E160, D179, and D181 together coordinate Mg(2+). Position 158 (E158) interacts with DNA. The residue at position 187 (S187) is a Phosphoserine; by CDK2. R192 is modified (symmetric dimethylarginine; by PRMT5). S197 bears the Phosphoserine mark. The DNA site is built by G231 and D233. D233 serves as a coordination point for Mg(2+). S255, S293, and S335 each carry phosphoserine. The segment at R327 to K380 is disordered. Residue T336 is modified to Phosphothreonine. Residues T336–F344 are interaction with PCNA. Position 354 is an N6-acetyllysine (K354). A compositionally biased stretch (basic residues) spans S363–K380. Phosphothreonine is present on T364. N6-acetyllysine is present on residues K375, K377, and K380.

The protein belongs to the XPG/RAD2 endonuclease family. FEN1 subfamily. As to quaternary structure, interacts with PCNA. Three molecules of FEN1 bind to one PCNA trimer with each molecule binding to one PCNA monomer. PCNA stimulates the nuclease activity without altering cleavage specificity. The C-terminal domain binds EP300; can bind simultaneously to both PCNA and EP300. Interacts with DDX11; this interaction is direct and increases flap endonuclease activity of FEN1. Interacts with WDR4; regulating its endonuclease activity. Interacts with POLB. The cofactor is Mg(2+). Post-translationally, acetylated by EP300. Acetylation inhibits both endonuclease and exonuclease activity. Acetylation also reduces DNA-binding activity but does not affect interaction with PCNA or EP300. In terms of processing, phosphorylation upon DNA damage induces relocalization to the nuclear plasma. Phosphorylation at Ser-187 by CDK2 occurs during late S-phase and results in dissociation from PCNA. Methylation at Arg-192 by PRMT5 impedes Ser-187 phosphorylation and increases interaction with PCNA.

It is found in the nucleus. The protein resides in the nucleolus. Its subcellular location is the nucleoplasm. It localises to the mitochondrion. Functionally, structure-specific nuclease with 5'-flap endonuclease and 5'-3' exonuclease activities involved in DNA replication and repair. During DNA replication, cleaves the 5'-overhanging flap structure that is generated by displacement synthesis when DNA polymerase encounters the 5'-end of a downstream Okazaki fragment. It enters the flap from the 5'-end and then tracks to cleave the flap base, leaving a nick for ligation. Also involved in the long patch base excision repair (LP-BER) pathway, by cleaving within the apurinic/apyrimidinic (AP) site-terminated flap. Acts as a genome stabilization factor that prevents flaps from equilibrating into structures that lead to duplications and deletions. Also possesses 5'-3' exonuclease activity on nicked or gapped double-stranded DNA, and exhibits RNase H activity. Also involved in replication and repair of rDNA and in repairing mitochondrial DNA. This Macaca fascicularis (Crab-eating macaque) protein is Flap endonuclease 1.